Here is a 68-residue protein sequence, read N- to C-terminus: Guanine nucleotide-binding protein G(I)/G(S)/G(O) subunit gamma-5B (68 aa).

The G protein gamma domain occupies 3–68 (GFSSVAATKK…FRPQKVCSFL (66 aa)). Cysteine 65 carries the post-translational modification Cysteine methyl ester. Cysteine 65 is lipidated: S-geranylgeranyl cysteine. The propeptide at 66 to 68 (SFL) is removed in mature form.

This sequence belongs to the G protein gamma family. In terms of assembly, g proteins are composed of 3 units; alpha, beta and gamma.

The protein localises to the cell membrane. In terms of biological role, guanine nucleotide-binding proteins (G proteins) are involved as a modulator or transducer in various transmembrane signaling systems. The beta and gamma chains are required for the GTPase activity, for replacement of GDP by GTP, and for G protein-effector interaction. This is Guanine nucleotide-binding protein G(I)/G(S)/G(O) subunit gamma-5B from Homo sapiens (Human).